The following is a 158-amino-acid chain: MIRIGHGFDVHAFGQDRPLMICGVEVPYHTGFIAHSDGDVALHALTDALLGAVALGDIGKLFPDTDMQYKNADSRKLLIEAYRQVRAQGYKVANVDVTIIAQAPKMRPYIDQMRQTIADDLQCDVMQVNVKATTTEKLGFTGRGEGIACEAVALLIKQ.

The a divalent metal cation site is built by aspartate 9 and histidine 11. 4-CDP-2-C-methyl-D-erythritol 2-phosphate contacts are provided by residues 9-11 (DVH) and 35-36 (HS). Histidine 43 contributes to the a divalent metal cation binding site. 4-CDP-2-C-methyl-D-erythritol 2-phosphate contacts are provided by residues 57 to 59 (DIG), 62 to 66 (FPDTD), 133 to 136 (TTTE), phenylalanine 140, and arginine 143.

It belongs to the IspF family. In terms of assembly, homotrimer. The cofactor is a divalent metal cation.

It carries out the reaction 4-CDP-2-C-methyl-D-erythritol 2-phosphate = 2-C-methyl-D-erythritol 2,4-cyclic diphosphate + CMP. Its pathway is isoprenoid biosynthesis; isopentenyl diphosphate biosynthesis via DXP pathway; isopentenyl diphosphate from 1-deoxy-D-xylulose 5-phosphate: step 4/6. Its function is as follows. Involved in the biosynthesis of isopentenyl diphosphate (IPP) and dimethylallyl diphosphate (DMAPP), two major building blocks of isoprenoid compounds. Catalyzes the conversion of 4-diphosphocytidyl-2-C-methyl-D-erythritol 2-phosphate (CDP-ME2P) to 2-C-methyl-D-erythritol 2,4-cyclodiphosphate (ME-CPP) with a corresponding release of cytidine 5-monophosphate (CMP). The sequence is that of 2-C-methyl-D-erythritol 2,4-cyclodiphosphate synthase from Actinobacillus pleuropneumoniae serotype 7 (strain AP76).